The primary structure comprises 154 residues: SsrA-binding protein (154 aa).

The segment covering 123–142 has biased composition (basic and acidic residues); that stretch reads AEHDKRHTIKDRDWQREQGR. Positions 123 to 154 are disordered; sequence AEHDKRHTIKDRDWQREQGRLMRHKVSAPHKD. Basic residues predominate over residues 143–154; that stretch reads LMRHKVSAPHKD.

The protein belongs to the SmpB family.

It is found in the cytoplasm. In terms of biological role, required for rescue of stalled ribosomes mediated by trans-translation. Binds to transfer-messenger RNA (tmRNA), required for stable association of tmRNA with ribosomes. tmRNA and SmpB together mimic tRNA shape, replacing the anticodon stem-loop with SmpB. tmRNA is encoded by the ssrA gene; the 2 termini fold to resemble tRNA(Ala) and it encodes a 'tag peptide', a short internal open reading frame. During trans-translation Ala-aminoacylated tmRNA acts like a tRNA, entering the A-site of stalled ribosomes, displacing the stalled mRNA. The ribosome then switches to translate the ORF on the tmRNA; the nascent peptide is terminated with the 'tag peptide' encoded by the tmRNA and targeted for degradation. The ribosome is freed to recommence translation, which seems to be the essential function of trans-translation. The sequence is that of SsrA-binding protein from Leptothrix cholodnii (strain ATCC 51168 / LMG 8142 / SP-6) (Leptothrix discophora (strain SP-6)).